The following is a 58-amino-acid chain: U11-myrmicitoxin-Tb1a (58 aa).

The propeptide occupies 1-24; sequence LAMAMGDAVADAQARAMAAAYAIA. Cysteine 34 and cysteine 57 are disulfide-bonded.

Belongs to the formicidae venom precursor-01 superfamily. In terms of tissue distribution, expressed by the venom gland.

The protein localises to the secreted. Its subcellular location is the target cell membrane. Its function is as follows. Neurotoxin that causes irreversible rapid flaccid paralysis in blowflies and honeybees upon intrathoracic injection. Causes a quick and irreversible cytolytic effect (at 10 uM) indicating it possibly acts as a pore-forming peptide. Shows only weak effect on aphids (A.pisum) at high doses 24 hours post intrathoracic injection. In vitro, is not cytotoxic on the dipteran S2 Drosophila embryonic cell line. The protein is U11-myrmicitoxin-Tb1a of Tetramorium bicarinatum (Tramp ant).